The chain runs to 166 residues: Transcription antitermination protein NusB (166 aa).

Positions 1 to 18 (MISDESDRFNPRDPKPAD) are enriched in basic and acidic residues. Residues 1–28 (MISDESDRFNPRDPKPADAGKPSKSAKR) form a disordered region.

It belongs to the NusB family.

In terms of biological role, involved in transcription antitermination. Required for transcription of ribosomal RNA (rRNA) genes. Binds specifically to the boxA antiterminator sequence of the ribosomal RNA (rrn) operons. The protein is Transcription antitermination protein NusB of Pseudomonas putida (strain W619).